The primary structure comprises 1300 residues: Phospholipid-transporting ATPase IK (1300 aa).

A compositionally biased stretch (polar residues) spans 1-11; it reads MGTGPAQTPRS. Residues 1–98 form a disordered region; the sequence is MGTGPAQTPR…SLGQREDLQD (98 aa). Topologically, residues 1 to 149 are cytoplasmic; the sequence is MGTGPAQTPR…TAKYNFYSFL (149 aa). Over residues 65–74 the composition is skewed to basic residues; that stretch reads RRHKAQPGRA. A helical membrane pass occupies residues 150 to 171; that stretch reads PLNLYEQFHRVSNLFFLIIIIL. At 172–177 the chain is on the exoplasmic loop side; it reads QSIPDI. A helical membrane pass occupies residues 178–197; the sequence is STLPWFSLSTPMVCLLFIRA. The Cytoplasmic portion of the chain corresponds to 198-381; sequence TRDLVDDMGR…TKLDLLMNKL (184 aa). A helical transmembrane segment spans residues 382–403; the sequence is VVVIFISVVLVCLVLAFGFGFS. Residues 404-430 are Exoplasmic loop-facing; the sequence is VKEFKDHHYYLSGVHGSSVAAESFFVF. The helical transmembrane segment at 431-452 threads the bilayer; sequence WSFLILLSVTIPMSMFILSEFI. Topologically, residues 453–995 are cytoplasmic; sequence YLGNSVFIDW…GRWSYVRICK (543 aa). The 4-aspartylphosphate intermediate role is filled by Asp-495. Residues Asp-495, Lys-496, Thr-497, Glu-596, Phe-637, Lys-660, Arg-693, Thr-763, Gly-764, Asp-765, Arg-913, and Lys-919 each contribute to the ATP site. A Mg(2+)-binding site is contributed by Asp-495. Thr-497 serves as a coordination point for Mg(2+). A Mg(2+)-binding site is contributed by Asp-939. ATP contacts are provided by Asn-942 and Asp-943. Asp-943 contributes to the Mg(2+) binding site. A helical membrane pass occupies residues 996–1016; sequence FLRYFFYKSMASMMVQVWFAC. Residues 1017–1028 are Exoplasmic loop-facing; it reads YNGFTGQPLYEG. A helical transmembrane segment spans residues 1029–1048; sequence WFLALFNLLYSTLPVLYIGL. The Cytoplasmic segment spans residues 1049-1078; sequence FEQDVSAEQSLEKPELYVVGQKDELFNYWV. The chain crosses the membrane as a helical span at residues 1079 to 1100; it reads FVQAIAHGVTTSLVNFFMTLWI. Over 1101–1112 the chain is Exoplasmic loop; it reads SRDTAGPASFSD. Residues 1113-1135 traverse the membrane as a helical segment; the sequence is HQSFAVVVALSCLLSITMEVILI. The Cytoplasmic segment spans residues 1136 to 1141; that stretch reads IKYWTA. Residues 1142 to 1162 traverse the membrane as a helical segment; sequence LCVATILLSLGFYAIMTTTTQ. At 1163-1182 the chain is on the exoplasmic loop side; sequence SFWLFRVSPTTFPFLYADLS. Residues 1183–1207 traverse the membrane as a helical segment; it reads VMSSPSILLVVLLSVSINTFPVLAL. Residues 1208–1300 lie on the Cytoplasmic side of the membrane; it reads RVIFPALKEL…EAASSPKESQ (93 aa). The tract at residues 1272-1300 is disordered; that stretch reads RGPGVSSDIASESLDPSDEEAASSPKESQ.

This sequence belongs to the cation transport ATPase (P-type) (TC 3.A.3) family. Type IV subfamily. Mg(2+) is required as a cofactor. In terms of tissue distribution, isoform 3 was only detected in testis.

The protein resides in the cytoplasmic vesicle. Its subcellular location is the secretory vesicle. It is found in the acrosome membrane. The protein localises to the endoplasmic reticulum membrane. It catalyses the reaction ATP + H2O + phospholipidSide 1 = ADP + phosphate + phospholipidSide 2.. The catalysed reaction is a 1,2-diacyl-sn-glycero-3-phospho-L-serine(out) + ATP + H2O = a 1,2-diacyl-sn-glycero-3-phospho-L-serine(in) + ADP + phosphate + H(+). Functionally, P4-ATPase flippase which catalyzes the hydrolysis of ATP coupled to the transport of aminophospholipids from the outer to the inner leaflet of various membranes and ensures the maintenance of asymmetric distribution of phospholipids. Phospholipid translocation also seems to be implicated in vesicle formation and in uptake of lipid signaling molecules. May be responsible for the maintenance of asymmetric distribution of phosphatidylserine (PS) in spermatozoa membranes. Involved in acrosome reactions and binding of spermatozoa to zona pellucida. The polypeptide is Phospholipid-transporting ATPase IK (Homo sapiens (Human)).